A 164-amino-acid polypeptide reads, in one-letter code: MDRFVSHFTNRLDAKGRVSIPASFRAVLARDGFEGLYVHPSIDAEAIDCGGHGLLREIDELLGRLSPYSEERDMFSTALLGTSEILKVDSEGRVVLTENVKTYAGIGSEVTFVGQGYKFQIWEPGRFRTHLEEARNRVRDLRKQLSSRPVAPDAQPPRPHGARE.

SpoVT-AbrB domains follow at residues 7 to 60 and 83 to 126; these read HFTN…EIDE and SEIL…EPGR. The interval 141-164 is disordered; it reads LRKQLSSRPVAPDAQPPRPHGARE. Positions 154 to 164 are enriched in pro residues; it reads AQPPRPHGARE.

The protein belongs to the MraZ family. In terms of assembly, forms oligomers.

Its subcellular location is the cytoplasm. The protein localises to the nucleoid. This Beijerinckia indica subsp. indica (strain ATCC 9039 / DSM 1715 / NCIMB 8712) protein is Transcriptional regulator MraZ.